A 109-amino-acid chain; its full sequence is Cell division protein ZapA (109 aa).

Positions 21 to 97 (PEQQEALNQA…QTIEQALVEQ (77 aa)) form a coiled coil.

Belongs to the ZapA family. Type 1 subfamily. Homodimer. Interacts with FtsZ.

It localises to the cytoplasm. Functionally, activator of cell division through the inhibition of FtsZ GTPase activity, therefore promoting FtsZ assembly into bundles of protofilaments necessary for the formation of the division Z ring. It is recruited early at mid-cell but it is not essential for cell division. The chain is Cell division protein ZapA from Sodalis glossinidius (strain morsitans).